Here is a 275-residue protein sequence, read N- to C-terminus: Autophagy-related protein 5 (275 aa).

Lysine 129 is covalently cross-linked (Glycyl lysine isopeptide (Lys-Gly) (interchain with G-Cter in lgg-3/ATG12)). Positions 221-231 (LSSSSSSSTDS) are enriched in low complexity. Residues 221–241 (LSSSSSSSTDSQSEHPPRLIS) are disordered.

It belongs to the ATG5 family. As to quaternary structure, most likely a component of a complex at least containing atg-5, lgg-3/ATG12, atg-16.1 and/or atg-16.2. Interacts with lgg-3/ATG12. Interacts with atg-16.1 (via N-terminus) and atg-16.2 (via N-terminus). In terms of processing, conjugated to lgg-3/ATG12; which is essential for autophagy.

Its subcellular location is the preautophagosomal structure membrane. Its function is as follows. Involved in autophagic vesicle formation. Conjugation with lgg-3/ATG12, through a ubiquitin-like conjugating system involving atg-7 as an E1-like activating enzyme and atg-10 as an E2-like conjugating enzyme, is essential for its function. Most likely a component of an atg-5-lgg-3-atg-16 complex that promotes autophagosome formation by associating with lgg-2, but not lgg-1, at the preautophagosomal membrane. Probably, as part of an atg-5-lgg-3-atg-16 complex, required for lgg-1 lipidation; the complex acts as an E3-like enzyme promoting atg-3-mediated lgg-1 lipidation. Furthermore, association with atg-16.2 is required for the nucleation of lgg-1 positive autophagic vesicles. The polypeptide is Autophagy-related protein 5 (Caenorhabditis elegans).